Reading from the N-terminus, the 227-residue chain is UPF0173 metal-dependent hydrolase BCG9842_B0515 (227 aa).

It belongs to the UPF0173 family.

The protein is UPF0173 metal-dependent hydrolase BCG9842_B0515 of Bacillus cereus (strain G9842).